The sequence spans 235 residues: Aspartate/glutamate leucyltransferase (235 aa).

This sequence belongs to the R-transferase family. Bpt subfamily.

It is found in the cytoplasm. It carries out the reaction N-terminal L-glutamyl-[protein] + L-leucyl-tRNA(Leu) = N-terminal L-leucyl-L-glutamyl-[protein] + tRNA(Leu) + H(+). The catalysed reaction is N-terminal L-aspartyl-[protein] + L-leucyl-tRNA(Leu) = N-terminal L-leucyl-L-aspartyl-[protein] + tRNA(Leu) + H(+). Its function is as follows. Functions in the N-end rule pathway of protein degradation where it conjugates Leu from its aminoacyl-tRNA to the N-termini of proteins containing an N-terminal aspartate or glutamate. In Pseudomonas savastanoi pv. phaseolicola (strain 1448A / Race 6) (Pseudomonas syringae pv. phaseolicola (strain 1448A / Race 6)), this protein is Aspartate/glutamate leucyltransferase.